Consider the following 533-residue polypeptide: Flavin-containing monooxygenase 5 (533 aa).

Arg5 carries the dimethylated arginine modification. Residues 10–14 (GSGAS), Glu33, and 41–42 (LW) contribute to the FAD site. Residue Ser54 is modified to Phosphoserine. Tyr56 is modified (phosphotyrosine). Ser58 carries the phosphoserine modification. 62–63 (NT) contributes to the FAD binding site. 196–199 (SGGD) contributes to the NADP(+) binding site. At Thr284 the chain carries Phosphothreonine. At Ser401 the chain carries Phosphoserine. A helical transmembrane segment spans residues 513-533 (LVTVRVLMLAVTFLAVILAYF).

The protein belongs to the FMO family. FAD is required as a cofactor.

It localises to the microsome membrane. The protein localises to the endoplasmic reticulum membrane. It carries out the reaction N,N-dimethylaniline + NADPH + O2 + H(+) = N,N-dimethylaniline N-oxide + NADP(+) + H2O. The enzyme catalyses NADPH + O2 + H(+) = H2O2 + NADP(+). It catalyses the reaction heptan-2-one + NADPH + O2 + H(+) = pentyl acetate + NADP(+) + H2O. The catalysed reaction is octan-3-one + NADPH + O2 + H(+) = pentyl propanoate + NADP(+) + H2O. It carries out the reaction octan-3-one + NADPH + O2 + H(+) = ethyl hexanoate + NADP(+) + H2O. The enzyme catalyses hexan-3-one + NADPH + O2 + H(+) = ethyl butanoate + NADP(+) + H2O. It catalyses the reaction hexan-3-one + NADPH + O2 + H(+) = propyl propanoate + NADP(+) + H2O. The catalysed reaction is heptan-4-one + NADPH + O2 + H(+) = propyl butanoate + NADP(+) + H2O. It carries out the reaction (2E)-geranial + NADPH + O2 + H(+) = (1E)-2,6-dimethylhepta-1,5-dien-1-yl formate + NADP(+) + H2O. The enzyme catalyses sulcatone + NADPH + O2 + H(+) = 4-methylpent-3-en-1-yl acetate + NADP(+) + H2O. Functionally, acts as a Baeyer-Villiger monooxygenase on a broad range of substrates. Catalyzes the insertion of an oxygen atom into a carbon-carbon bond adjacent to a carbonyl, which converts ketones to esters. Active on diverse carbonyl compounds, whereas soft nucleophiles are mostly non- or poorly reactive. In contrast with other forms of FMO it is non- or poorly active on 'classical' substrates such as drugs, pesticides, and dietary components containing soft nucleophilic heteroatoms. Able to oxidize drug molecules bearing a carbonyl group on an aliphatic chain, such as nabumetone and pentoxifylline. Also, in the absence of substrates, shows slow but yet significant NADPH oxidase activity. Acts as a positive modulator of cholesterol biosynthesis as well as glucose homeostasis, promoting metabolic aging via pleiotropic effects. The polypeptide is Flavin-containing monooxygenase 5 (Rattus norvegicus (Rat)).